A 125-amino-acid chain; its full sequence is Glycine cleavage system H protein (125 aa).

In terms of domain architecture, Lipoyl-binding spans 22 to 104 (SYIIGITDFA…YDTGWILKLT (83 aa)). K63 carries the N6-lipoyllysine modification.

It belongs to the GcvH family. In terms of assembly, the glycine cleavage system is composed of four proteins: P, T, L and H. It depends on (R)-lipoate as a cofactor.

Its function is as follows. The glycine cleavage system catalyzes the degradation of glycine. The H protein shuttles the methylamine group of glycine from the P protein to the T protein. In terms of biological role, is also involved in protein lipoylation via its role as an octanoyl/lipoyl carrier protein intermediate. The protein is Glycine cleavage system H protein of Listeria welshimeri serovar 6b (strain ATCC 35897 / DSM 20650 / CCUG 15529 / CIP 8149 / NCTC 11857 / SLCC 5334 / V8).